Here is a 313-residue protein sequence, read N- to C-terminus: uncharacterized protein (313 aa).

2 disordered regions span residues 24 to 53 and 190 to 291; these read EEGE…PTPN and TALS…PCAR. Residues 211–229 are compositionally biased toward polar residues; the sequence is TQNYVLKLQLSSPNSQPMS. Over residues 239–260 the composition is skewed to low complexity; it reads SCSSSNCSSSSSSSACSSVSIS. The span at 261–284 shows a compositional bias: polar residues; it reads DPNNITAYETNNVNPQFPSNQPLD.

This is an uncharacterized protein from Saccharomyces cerevisiae (strain ATCC 204508 / S288c) (Baker's yeast).